Consider the following 541-residue polypeptide: ATP synthase subunit beta (541 aa).

The interval 1–65 is disordered; it reads MAKAVTSSKG…TPVKKEERAK (65 aa). 2 stretches are compositionally biased toward basic and acidic residues: residues 25-36 and 52-65; these read VKKDASKSKDAS and AAKD…ERAK. 214–221 provides a ligand contact to ATP; it reads GGAGVGKT.

Belongs to the ATPase alpha/beta chains family. As to quaternary structure, F-type ATPases have 2 components, CF(1) - the catalytic core - and CF(0) - the membrane proton channel. CF(1) has five subunits: alpha(3), beta(3), gamma(1), delta(1), epsilon(1). CF(0) has three main subunits: a(1), b(2) and c(9-12). The alpha and beta chains form an alternating ring which encloses part of the gamma chain. CF(1) is attached to CF(0) by a central stalk formed by the gamma and epsilon chains, while a peripheral stalk is formed by the delta and b chains.

The protein resides in the cell inner membrane. The enzyme catalyses ATP + H2O + 4 H(+)(in) = ADP + phosphate + 5 H(+)(out). Produces ATP from ADP in the presence of a proton gradient across the membrane. The catalytic sites are hosted primarily by the beta subunits. The protein is ATP synthase subunit beta of Bartonella tribocorum (strain CIP 105476 / IBS 506).